The following is a 496-amino-acid chain: Aldehyde dehydrogenase (496 aa).

Residues E263 and C296 contribute to the active site.

The protein belongs to the aldehyde dehydrogenase family.

The protein localises to the cytoplasm. It catalyses the reaction an aldehyde + NAD(+) + H2O = a carboxylate + NADH + 2 H(+). This is Aldehyde dehydrogenase (CLAH10) from Davidiella tassiana (Mycosphaerella tassiana).